Reading from the N-terminus, the 60-residue chain is Large ribosomal subunit protein bL32 (60 aa).

This sequence belongs to the bacterial ribosomal protein bL32 family.

The protein is Large ribosomal subunit protein bL32 of Borrelia turicatae (strain 91E135).